A 95-amino-acid chain; its full sequence is Small ribosomal subunit protein uS19 (95 aa).

It belongs to the universal ribosomal protein uS19 family.

In terms of biological role, protein S19 forms a complex with S13 that binds strongly to the 16S ribosomal RNA. The polypeptide is Small ribosomal subunit protein uS19 (Thermosipho melanesiensis (strain DSM 12029 / CIP 104789 / BI429)).